A 322-amino-acid chain; its full sequence is GDSL esterase/lipase At5g03600 (322 aa).

Ser21 serves as the catalytic Nucleophile. Catalysis depends on residues Asp295 and His298.

Belongs to the 'GDSL' lipolytic enzyme family.

This chain is GDSL esterase/lipase At5g03600, found in Arabidopsis thaliana (Mouse-ear cress).